The following is a 447-amino-acid chain: Serine/threonine-protein phosphatase 2A 55 kDa regulatory subunit B delta isoform (447 aa).

WD repeat units follow at residues 26 to 65 (AEAD…KNRP), 91 to 132 (EIEE…KRAE), 175 to 213 (AHTY…RSFN), 224 to 264 (ELTE…LCDR), 283 to 321 (EIIS…RPVE), 338 to 379 (ENDC…DITL), and 414 to 447 (DFNK…DKMN).

This sequence belongs to the phosphatase 2A regulatory subunit B family. In terms of assembly, PP2A consists of a common heterodimeric core enzyme, composed of a 36 kDa catalytic subunit (subunit C) and a 65 kDa constant regulatory subunit (PR65 or subunit A), that associates with a variety of regulatory subunits.

It localises to the cytoplasm. Its function is as follows. Substrate-recognition subunit of protein phosphatase 2A (PP2A) that plays a key role in cell cycle by controlling mitosis entry and exit. The activity of PP2A complexes containing PPP2R2D (PR55-delta) fluctuate during the cell cycle: the activity is high in interphase and low in mitosis. The protein is Serine/threonine-protein phosphatase 2A 55 kDa regulatory subunit B delta isoform (ppp2r2d) of Danio rerio (Zebrafish).